Consider the following 427-residue polypeptide: MAMNFVTFNQDYSYLAVATSKGFQIFTTEPFAKSYEAKEGNIAVIEMLFSTSLVALILSPRRLQIQNTKRQCTICELTFPTTVLAVKLNRKRLVIVLEDQIYLYDIQTMKLLSTIDTSPNPNAICALAPSSENCYMAYPLPQKAPAAASTPAHAPPGTTHVSPTTGDVLIFDAVKLEAINVIEAHRSPLALIALNSDGTLLATASDKGTIIRIFSVPDGHKLYQFRRGSMPSRIYSMSFNTTSTLLCVSSSTETVHIFKLAQQGPSSDGSSSHSPPSRDHGSPPNTYGYAHEEDEAVGDAGSDSSLRKHNGTLMGMIRRTSQNVGGAVAARMGGYLPKGVSEMWEPARDFAWIKLPRSNPGPGGNTGAGPLRSVVAMSSNTPQVMVVTSDGNFYVFNIDLSKGGEGTLTKQYSVVDSTDRLGYTTEY.

WD repeat units follow at residues 1 to 36, 69 to 114, 184 to 224, 229 to 268, 308 to 354, and 366 to 406; these read MAMNFVTFNQDYSYLAVATSKGFQIFTTEPFAKSYE, KRQC…LLST, AHRS…KLYQ, SMPSRIYSMSFNTTSTLLCVSSSTETVHIFKLAQQGPSSD, KHNG…AWIK, and TGAG…GGEG. The L/FRRG motif signature appears at 225–229; the sequence is FRRGS. Residues 262–290 form a disordered region; sequence QQGPSSDGSSSHSPPSRDHGSPPNTYGYA. A compositionally biased stretch (low complexity) spans 265 to 275; that stretch reads PSSDGSSSHSP.

Belongs to the WD repeat PROPPIN family. In terms of assembly, component of the PI(3,5)P2 regulatory complex.

The protein localises to the preautophagosomal structure membrane. Its subcellular location is the vacuole membrane. It localises to the endosome membrane. In terms of biological role, the PI(3,5)P2 regulatory complex regulates both the synthesis and turnover of phosphatidylinositol 3,5-bisphosphate (PtdIns(3,5)P2). Necessary for proper vacuole morphology. Plays an important role in osmotically-induced vacuole fragmentation. Required for cytoplasm to vacuole transport (Cvt) vesicle formation, pexophagy and starvation-induced autophagy. Involved in correct atg9 trafficking to the pre-autophagosomal structure. Might also be involved in premeiotic DNA replication. In Penicillium rubens (strain ATCC 28089 / DSM 1075 / NRRL 1951 / Wisconsin 54-1255) (Penicillium chrysogenum), this protein is Autophagy-related protein 18 (atg18).